The sequence spans 586 residues: Arginine--tRNA ligase (586 aa).

The 'HIGH' region signature appears at 133–143 (ANPTGPLNIVS).

Belongs to the class-I aminoacyl-tRNA synthetase family. In terms of assembly, monomer.

The protein localises to the cytoplasm. It carries out the reaction tRNA(Arg) + L-arginine + ATP = L-arginyl-tRNA(Arg) + AMP + diphosphate. The polypeptide is Arginine--tRNA ligase (Leptospira borgpetersenii serovar Hardjo-bovis (strain JB197)).